We begin with the raw amino-acid sequence, 181 residues long: UPF0302 protein lin2035 (181 aa).

It belongs to the UPF0302 family.

In Listeria innocua serovar 6a (strain ATCC BAA-680 / CLIP 11262), this protein is UPF0302 protein lin2035.